The primary structure comprises 490 residues: GTPase Der (490 aa).

EngA-type G domains follow at residues Pro3–Glu166 and Ile196–Val369. Residues Gly9–Ser16, Asp56–Ile60, Asn118–Asp121, Gly202–Ser209, Asp249–Val253, and Asn314–Asp317 each bind GTP. The KH-like domain maps to Thr370–Glu454. The interval Gly452 to Arg490 is disordered. Residues Asn470–Arg490 show a composition bias toward basic residues.

This sequence belongs to the TRAFAC class TrmE-Era-EngA-EngB-Septin-like GTPase superfamily. EngA (Der) GTPase family. In terms of assembly, associates with the 50S ribosomal subunit.

Functionally, GTPase that plays an essential role in the late steps of ribosome biogenesis. In Pseudomonas savastanoi pv. phaseolicola (strain 1448A / Race 6) (Pseudomonas syringae pv. phaseolicola (strain 1448A / Race 6)), this protein is GTPase Der.